Consider the following 577-residue polypeptide: Arginine--tRNA ligase (577 aa).

Positions 122-132 match the 'HIGH' region motif; sequence PNVAKEMHVGH.

This sequence belongs to the class-I aminoacyl-tRNA synthetase family. As to quaternary structure, monomer.

The protein resides in the cytoplasm. The catalysed reaction is tRNA(Arg) + L-arginine + ATP = L-arginyl-tRNA(Arg) + AMP + diphosphate. The protein is Arginine--tRNA ligase of Enterobacter sp. (strain 638).